The chain runs to 215 residues: Ras-related protein RAB1BV (215 aa).

GTP contacts are provided by residues 22-29 (GDSGVGKS), 70-74 (DTAGQ), and 128-131 (NKAD). The segment at 183–215 (DSDTRQEAQPSITIKPADQSGNQAAAKSACCGS) is disordered. S-geranylgeranyl cysteine attachment occurs at residues Cys212 and Cys213.

The protein belongs to the small GTPase superfamily. Rab family.

It is found in the cell membrane. This is Ras-related protein RAB1BV (RAB1BV) from Beta vulgaris (Sugar beet).